A 229-amino-acid chain; its full sequence is Triosephosphate isomerase (229 aa).

Substrate is bound at residue 9–11 (NLK). H93 (electrophile) is an active-site residue. Catalysis depends on E141, which acts as the Proton acceptor. Substrate is bound by residues I146, G181, and 202-203 (AS).

Belongs to the triosephosphate isomerase family. In terms of assembly, homotetramer; dimer of dimers.

The protein localises to the cytoplasm. The catalysed reaction is D-glyceraldehyde 3-phosphate = dihydroxyacetone phosphate. It functions in the pathway carbohydrate biosynthesis; gluconeogenesis. The protein operates within carbohydrate degradation; glycolysis; D-glyceraldehyde 3-phosphate from glycerone phosphate: step 1/1. Its function is as follows. Involved in the gluconeogenesis. Catalyzes stereospecifically the conversion of dihydroxyacetone phosphate (DHAP) to D-glyceraldehyde-3-phosphate (G3P). The polypeptide is Triosephosphate isomerase (Pyrobaculum islandicum (strain DSM 4184 / JCM 9189 / GEO3)).